The following is a 474-amino-acid chain: Lipoprotein lipase (474 aa).

Residues 1 to 27 form the signal peptide; the sequence is MESKALLLVVLGVWLQSLTAFRGGVAA. An interaction with GPIHBP1 region spans residues 32-53; the sequence is RDFSDIESKFALRTPEDTAEDT. The cysteines at positions 54 and 67 are disulfide-linked. Asn-70 carries an N-linked (GlcNAc...) asparagine glycan. Residue Tyr-121 is modified to 3'-nitrotyrosine. The active-site Nucleophile is Ser-159. Asp-183 serves as the catalytic Charge relay system. Tyr-191 carries the 3'-nitrotyrosine modification. Ca(2+) is bound by residues Ala-194, Arg-197, Ser-199, and Asp-202. Cys-243 and Cys-266 are oxidised to a cystine. The segment at 243–266 is essential for determining substrate specificity; it reads CNIGEAIRVIAERGLGDVDQLVKC. The Charge relay system role is filled by His-268. Cystine bridges form between Cys-291–Cys-310 and Cys-302–Cys-305. The region spanning 341–464 is the PLAT domain; that stretch reads FHYQVKIHFS…KGKDSAVFVK (124 aa). Residue Tyr-343 is modified to 3'-nitrotyrosine. A glycan (N-linked (GlcNAc...) asparagine) is linked at Asn-386. An important for interaction with lipoprotein particles region spans residues 417 to 421; the sequence is WPDWW. Residues 430 to 434 form an important for heparin binding region; it reads RIRVK. An interaction with GPIHBP1 region spans residues 443-467; that stretch reads IFCAREKVSHLQKGKDSAVFVKCHD. A disulfide bridge links Cys-445 with Cys-465.

It belongs to the AB hydrolase superfamily. Lipase family. In terms of assembly, homodimer. Interacts with GPIHBP1 with 1:1 stoichiometry. Interacts with APOC2; the interaction activates LPL activity in the presence of lipids. Interaction with heparan sulfate proteoglycans is required to protect LPL against loss of activity. Associates with lipoprotein particles in blood plasma. Interacts with LMF1 and SEL1L; interaction with SEL1L is required to prevent aggregation of newly synthesized LPL in the endoplasmic reticulum (ER), and for normal export of LPL from the ER to the extracellular space. Interacts with SORL1; SORL1 acts as a sorting receptor, promoting LPL localization to endosomes and later to lysosomes, leading to degradation of newly synthesized LPL. Post-translationally, tyrosine nitration after lipopolysaccharide (LPS) challenge down-regulates the lipase activity. In terms of processing, N-glycosylated. In terms of tissue distribution, detected in white and brown adipose tissue and heart muscle, especially at the lumenal surface of capillaries. Detected on capillary endothelium in the lactating mammary gland. Detected in blood plasma (at protein level). Expressed in liver, epididymal fat, heart, psoas muscle, lactating mammary gland, adrenal, lung, and ovary. Highest levels in heart and adrenal gland.

The protein resides in the cell membrane. It localises to the secreted. Its subcellular location is the extracellular space. It is found in the extracellular matrix. It carries out the reaction a triacylglycerol + H2O = a diacylglycerol + a fatty acid + H(+). It catalyses the reaction a 1,2-diacyl-sn-glycero-3-phosphocholine + H2O = a 2-acyl-sn-glycero-3-phosphocholine + a fatty acid + H(+). The catalysed reaction is 1,2,3-tri-(9Z-octadecenoyl)-glycerol + H2O = di-(9Z)-octadecenoylglycerol + (9Z)-octadecenoate + H(+). The enzyme catalyses 1,2-di-(9Z-octadecenoyl)-sn-glycero-3-phosphocholine + H2O = (9Z-octadecenoyl)-sn-glycero-3-phosphocholine + (9Z)-octadecenoate + H(+). It carries out the reaction 1,2,3-tributanoylglycerol + H2O = dibutanoylglycerol + butanoate + H(+). It catalyses the reaction 1,2-dihexadecanoyl-sn-glycero-3-phosphocholine + H2O = hexadecanoyl-sn-glycero-3-phosphocholine + hexadecanoate + H(+). The apolipoprotein APOC2 acts as a coactivator of LPL activity. Ca(2+) binding promotes protein stability and formation of the active homodimer. Interaction with GPIHBP1 protects LPL against inactivation by ANGPTL4. Its function is as follows. Key enzyme in triglyceride metabolism. Catalyzes the hydrolysis of triglycerides from circulating chylomicrons and very low density lipoproteins (VLDL), and thereby plays an important role in lipid clearance from the blood stream, lipid utilization and storage. Although it has both phospholipase and triglyceride lipase activities it is primarily a triglyceride lipase with low but detectable phospholipase activity. Mediates margination of triglyceride-rich lipoprotein particles in capillaries. Recruited to its site of action on vascular endothelium by binding to GPIHBP1 and cell surface heparan sulfate proteoglycans. In Mus musculus (Mouse), this protein is Lipoprotein lipase (Lpl).